The sequence spans 408 residues: Probable fructose-2,6-bisphosphatase C732.02c (408 aa).

16 to 24 (GLPASGKTS) lines the ATP pocket. The active site involves Asp-88. 127-132 (NITDMC) lines the ATP pocket. Residue Tyr-157 participates in beta-D-fructose 6-phosphate binding. Residue Arg-213 participates in beta-D-fructose 2,6-bisphosphate binding. His-214 acts as the Tele-phosphohistidine intermediate in catalysis. 2 residues coordinate beta-D-fructose 2,6-bisphosphate: Asn-220 and Gly-226. Glu-285 serves as the catalytic Proton donor/acceptor. Beta-D-fructose 2,6-bisphosphate is bound by residues Tyr-296, Arg-310, Lys-314, Tyr-325, Gln-351, and Arg-355. Residue 307–310 (AELR) participates in ATP binding. ATP-binding positions include 351 to 355 (QAILR) and Tyr-387.

This sequence in the C-terminal section; belongs to the phosphoglycerate mutase family.

It catalyses the reaction beta-D-fructose 2,6-bisphosphate + H2O = beta-D-fructose 6-phosphate + phosphate. Functionally, this is predominantly if not solely a fructose-2,6-bisphosphatase. This chain is Probable fructose-2,6-bisphosphatase C732.02c, found in Schizosaccharomyces pombe (strain 972 / ATCC 24843) (Fission yeast).